The following is a 129-amino-acid chain: Thioredoxin H7 (129 aa).

The region spanning 6–129 (SSVHDVHSSM…LVKKIEQHRV (124 aa)) is the Thioredoxin domain. Catalysis depends on nucleophile residues C55 and C58. A disulfide bridge links C55 with C58.

It belongs to the thioredoxin family. Plant H-type subfamily.

It is found in the cytoplasm. Functionally, probable thiol-disulfide oxidoreductase that may be involved in the redox regulation of a number of cytosolic enzymes. This Arabidopsis thaliana (Mouse-ear cress) protein is Thioredoxin H7 (TRX7).